The chain runs to 276 residues: Transport and Golgi organization protein 2 homolog (276 aa).

This sequence belongs to the Tango2 family.

The protein localises to the cytoplasm. It is found in the mitochondrion. Its subcellular location is the golgi apparatus. May be involved in lipid homeostasis. The sequence is that of Transport and Golgi organization protein 2 homolog (TANGO2) from Homo sapiens (Human).